The primary structure comprises 323 residues: UPF0612 protein C569.01c (323 aa).

Coiled-coil stretches lie at residues 27 to 63 and 131 to 225; these read IKRY…MKYE and NEMN…DARS.

The protein belongs to the UPF0612 family.

The sequence is that of UPF0612 protein C569.01c from Schizosaccharomyces pombe (strain 972 / ATCC 24843) (Fission yeast).